A 431-amino-acid polypeptide reads, in one-letter code: UDP-N-acetylmuramoylalanine--D-glutamate ligase (431 aa).

Gly111 to Thr117 provides a ligand contact to ATP.

The protein belongs to the MurCDEF family.

It localises to the cytoplasm. It carries out the reaction UDP-N-acetyl-alpha-D-muramoyl-L-alanine + D-glutamate + ATP = UDP-N-acetyl-alpha-D-muramoyl-L-alanyl-D-glutamate + ADP + phosphate + H(+). It participates in cell wall biogenesis; peptidoglycan biosynthesis. Functionally, cell wall formation. Catalyzes the addition of glutamate to the nucleotide precursor UDP-N-acetylmuramoyl-L-alanine (UMA). In Petrotoga mobilis (strain DSM 10674 / SJ95), this protein is UDP-N-acetylmuramoylalanine--D-glutamate ligase.